A 418-amino-acid chain; its full sequence is Methionine aminopeptidase 2 (418 aa).

Positions 18-49 are disordered; the sequence is VSEPAAVDDSEVTEDATVQDKKKKKKKKKKKG. The segment covering 38–49 has biased composition (basic residues); it reads KKKKKKKKKKKG. Residue histidine 172 coordinates substrate. A divalent metal cation contacts are provided by aspartate 192, aspartate 203, and histidine 272. A substrate-binding site is contributed by histidine 280. Residues glutamate 305 and glutamate 399 each contribute to the a divalent metal cation site.

Belongs to the peptidase M24A family. Methionine aminopeptidase eukaryotic type 2 subfamily. The cofactor is Co(2+). Zn(2+) serves as cofactor. Requires Mn(2+) as cofactor. It depends on Fe(2+) as a cofactor.

Its subcellular location is the cytoplasm. The catalysed reaction is Release of N-terminal amino acids, preferentially methionine, from peptides and arylamides.. Cotranslationally removes the N-terminal methionine from nascent proteins. The N-terminal methionine is often cleaved when the second residue in the primary sequence is small and uncharged (Met-Ala-, Cys, Gly, Pro, Ser, Thr, or Val). This Kluyveromyces lactis (strain ATCC 8585 / CBS 2359 / DSM 70799 / NBRC 1267 / NRRL Y-1140 / WM37) (Yeast) protein is Methionine aminopeptidase 2.